Reading from the N-terminus, the 146-residue chain is Hemoglobin subunit beta (146 aa).

N-acetylvaline is present on Val-1. The region spanning 2 to 146 (HLTADEKAAV…VATALAHKYH (145 aa)) is the Globin domain. A Phosphoserine modification is found at Ser-44. Lys-59 bears the N6-acetyllysine mark. His-63 contacts heme b. Lys-82 carries the N6-acetyllysine modification. His-92 serves as a coordination point for heme b. The residue at position 93 (Cys-93) is an S-nitrosocysteine. At Lys-144 the chain carries N6-acetyllysine.

It belongs to the globin family. As to quaternary structure, heterotetramer of two alpha chains and two beta chains. Red blood cells.

Its function is as follows. Involved in oxygen transport from the lung to the various peripheral tissues. This is Hemoglobin subunit beta (HBB) from Myotis velifer (Mouse-eared bat).